Reading from the N-terminus, the 216-residue chain is Endo-1,4-beta-xylanase 2 (216 aa).

The signal sequence occupies residues 1–27; the sequence is MVSFSSLFVAACAAVTAFALPNELEKR. Residues 28-216 form the GH11 domain; the sequence is AITSNEQGTN…SSGSASITVS (189 aa). Residue Asn-87 is glycosylated (N-linked (GlcNAc...) asparagine). Glu-112 acts as the Nucleophile in catalysis. Residue Glu-203 is the Proton donor of the active site.

It belongs to the glycosyl hydrolase 11 (cellulase G) family.

The protein localises to the secreted. The catalysed reaction is Endohydrolysis of (1-&gt;4)-beta-D-xylosidic linkages in xylans.. Its pathway is glycan degradation; xylan degradation. In terms of biological role, endo-1,4-beta-xylanase involved in the hydrolysis of xylan, a major structural heterogeneous polysaccharide found in plant biomass representing the second most abundant polysaccharide in the biosphere, after cellulose. The polypeptide is Endo-1,4-beta-xylanase 2 (xyn2) (Rhizopus oryzae (Mucormycosis agent)).